Reading from the N-terminus, the 573-residue chain is Adenine deaminase (573 aa).

The protein belongs to the metallo-dependent hydrolases superfamily. Adenine deaminase family. Mn(2+) is required as a cofactor.

The catalysed reaction is adenine + H2O + H(+) = hypoxanthine + NH4(+). This is Adenine deaminase from Bacillus licheniformis (strain ATCC 14580 / DSM 13 / JCM 2505 / CCUG 7422 / NBRC 12200 / NCIMB 9375 / NCTC 10341 / NRRL NRS-1264 / Gibson 46).